The chain runs to 163 residues: Retinoic acid receptor responder protein 2 (163 aa).

The N-terminal stretch at 1 to 20 (MKYLLISLALWLGMVGIHGT) is a signal peptide. 3 disulfides stabilise this stretch: Cys-79-Cys-89, Cys-100-Cys-119, and Cys-103-Cys-135. The propeptide occupies 158 to 163 (RALKHK).

Secreted in an inactive precursor form, prochemerin, which is proteolytically processed by a variety of extracellular proteases to generate forms with differing levels of bioactivity. For example, the removal of six amino acids results in chemerin-157, which exhibits the highest activity, while removal of seven amino acids results in chemerin-156 which has slightly less activity. Some proteases are able to cleave at more than one site and chemerin forms may be sequentially processed by different enzymes to modulate activity levels. The coordinated expression and activity of chemerin-modifying enzymes is essential for regulating its bioactivation, inactivation and, consequently, biological function. Cathepsin G cleaves seven C-terminal amino acids from prochemerin (chemerin-156), elastase is able to cleave six (chemerin-157), eight (chemerin-155) or eleven (chemerin-152), plasmin cleaves five amino acids (chemerin-158), and tryptase cleaves five (chemerin-158) or eight (chemerin-155). Multiple cleavages might be required to fully activate chemerin, with an initial tryptase cleavage resulting in chemerin with low activity (chemerin-158), and a second cleavage by carboxypeptidase N or B producing highly active chemerin (chemerin-157).

The protein localises to the secreted. Its function is as follows. Adipocyte-secreted protein (adipokine) that regulates adipogenesis, metabolism and inflammation through activation of the chemokine-like receptor 1 (CMKLR1). Also acts as a ligand for CMKLR2. Can also bind to C-C chemokine receptor-like 2 (CCRL2), but with a lower affinity than it does to CMKLR1 or CMKLR2. Positively regulates adipocyte differentiation, modulates the expression of adipocyte genes involved in lipid and glucose metabolism and might play a role in angiogenesis, a process essential for the expansion of white adipose tissue. Also acts as a pro-inflammatory adipokine, causing an increase in secretion of pro-inflammatory and prodiabetic adipokines, which further impair adipose tissue metabolic function and have negative systemic effects including impaired insulin sensitivity, altered glucose and lipid metabolism, and a decrease in vascular function in other tissues. Can have both pro- and anti-inflammatory properties depending on the modality of enzymatic cleavage by different classes of proteases. Acts as a chemotactic factor for leukocyte populations expressing CMKLR1, particularly immature plasmacytoid dendritic cells, but also immature myeloid DCs, macrophages and natural killer cells. Exerts an anti-inflammatory role by preventing TNF/TNFA-induced VCAM1 expression and monocytes adhesion in vascular endothelial cells. The effect is mediated via inhibiting activation of NF-kappa-B and CRK/p38 through stimulation of AKT1/NOS3 signaling and nitric oxide production. Its dual role in inflammation and metabolism might provide a link Exhibits an antimicrobial function in the skin. The polypeptide is Retinoic acid receptor responder protein 2 (RARRES2) (Cricetulus griseus (Chinese hamster)).